Reading from the N-terminus, the 906-residue chain is Cadherin-2 (906 aa).

A signal peptide spans 1 to 25; the sequence is MCRIAGAPRTLLPLLAALLQASVEA. The propeptide occupies 26-159; sequence SGEIALCKTG…HSGHLQRQKR (134 aa). 2 positions are modified to phosphoserine: serine 96 and serine 135. Cadherin domains lie at 160-267, 268-382, 383-497, 498-603, and 604-714; these read DWVI…RPEF, LHQV…PPEF, TAMT…NPYF, APNP…DNAP, and QVLP…DVDR. Over 160 to 724 the chain is Extracellular; the sequence is DWVIPPINLP…IVGAGLGTGA (565 aa). Glutamate 170 is a Ca(2+) binding site. Asparagine 190 is a glycosylation site (N-linked (GlcNAc...) asparagine). Aspartate 226, glutamate 228, aspartate 259, methionine 260, asparagine 261, aspartate 262, and asparagine 263 together coordinate Ca(2+). Residue asparagine 273 is glycosylated (N-linked (GlcNAc...) asparagine). Ca(2+) contacts are provided by aspartate 293, aspartate 295, and asparagine 301. The N-linked (GlcNAc...) asparagine glycan is linked to asparagine 325. Aspartate 353 is a binding site for Ca(2+). Asparagine 402, asparagine 572, asparagine 622, asparagine 651, and asparagine 692 each carry an N-linked (GlcNAc...) asparagine glycan. The helical transmembrane segment at 725 to 745 threads the bilayer; it reads IIAILLCIIILLILVLMFVVW. The Cytoplasmic segment spans residues 746–906; the sequence is MKRRDKERQA…LADMYGGGDD (161 aa). Positions 863-880 are enriched in low complexity; the sequence is SGSTAGSLSSLNSSSSGG. Residues 863–884 form a disordered region; that stretch reads SGSTAGSLSSLNSSSSGGEQDY.

Homodimer (via extracellular region). Can also form heterodimers with other cadherins (via extracellular region). Dimerization occurs in trans, i.e. with a cadherin chain from another cell. Interacts with CDCP1. Interacts with PCDH8; this complex may also include TAOK2. The interaction with PCDH8 may lead to internalization through TAOK2/p38 MAPK pathway. Identified in a complex containing FGFR4, NCAM1, CDH2, PLCG1, FRS2, SRC, SHC1, GAP43 and CTTN. May interact with OBSCN (via protein kinase domain 2). Interacts with FBXO45. Cleaved by MMP24. Ectodomain cleavage leads to the generation of a soluble 90 kDa N-terminal soluble fragment and a 45 kDa membrane-bound C-terminal fragment 1 (CTF1), which is further cleaved by gamma-secretase into a 35 kDa. Cleavage in neural stem cells by MMP24 affects CDH2-mediated anchorage of neural stem cells to ependymocytes in the adult subependymal zone, leading to modulate neural stem cell quiescence.

Its subcellular location is the cell membrane. The protein localises to the sarcolemma. It localises to the cell junction. It is found in the cell surface. The protein resides in the desmosome. Its subcellular location is the adherens junction. In terms of biological role, calcium-dependent cell adhesion protein; preferentially mediates homotypic cell-cell adhesion by dimerization with a CDH2 chain from another cell. Cadherins may thus contribute to the sorting of heterogeneous cell types. Acts as a regulator of neural stem cells quiescence by mediating anchorage of neural stem cells to ependymocytes in the adult subependymal zone: upon cleavage by MMP24, CDH2-mediated anchorage is affected, leading to modulate neural stem cell quiescence. Plays a role in cell-to-cell junction formation between pancreatic beta cells and neural crest stem (NCS) cells, promoting the formation of processes by NCS cells. Required for proper neurite branching. Required for pre- and postsynaptic organization. CDH2 may be involved in neuronal recognition mechanism. In hippocampal neurons, may regulate dendritic spine density. This is Cadherin-2 (CDH2) from Callithrix jacchus (White-tufted-ear marmoset).